We begin with the raw amino-acid sequence, 247 residues long: Probable transcriptional regulatory protein EUBELI_00902 (247 aa).

Belongs to the TACO1 family.

It localises to the cytoplasm. The protein is Probable transcriptional regulatory protein EUBELI_00902 of Lachnospira eligens (strain ATCC 27750 / DSM 3376 / VPI C15-48 / C15-B4) (Eubacterium eligens).